Reading from the N-terminus, the 272-residue chain is Shikimate dehydrogenase (NADP(+)) (272 aa).

Shikimate-binding positions include 14–16 (SKS) and Thr-61. The Proton acceptor role is filled by Lys-65. Residue Glu-77 coordinates NADP(+). Shikimate-binding residues include Asn-86 and Asp-102. NADP(+)-binding positions include 126 to 130 (GAGGA), 149 to 154 (NRTASR), and Met-213. Shikimate is bound at residue Tyr-215. Gly-237 is a binding site for NADP(+).

It belongs to the shikimate dehydrogenase family. In terms of assembly, homodimer.

It catalyses the reaction shikimate + NADP(+) = 3-dehydroshikimate + NADPH + H(+). It participates in metabolic intermediate biosynthesis; chorismate biosynthesis; chorismate from D-erythrose 4-phosphate and phosphoenolpyruvate: step 4/7. In terms of biological role, involved in the biosynthesis of the chorismate, which leads to the biosynthesis of aromatic amino acids. Catalyzes the reversible NADPH linked reduction of 3-dehydroshikimate (DHSA) to yield shikimate (SA). The polypeptide is Shikimate dehydrogenase (NADP(+)) (Salmonella schwarzengrund (strain CVM19633)).